The chain runs to 463 residues: 23S rRNA (uracil(1939)-C(5))-methyltransferase RlmD (463 aa).

The 71-residue stretch at 6 to 76 (KSRKPQQPEY…KRLEEAEMVA (71 aa)) folds into the TRAM domain. The [4Fe-4S] cluster site is built by Cys-90, Cys-96, Cys-99, and Cys-178. S-adenosyl-L-methionine-binding residues include Gln-288, Phe-317, Asn-322, Glu-341, Asp-368, and Asp-389. Cys-415 functions as the Nucleophile in the catalytic mechanism.

The protein belongs to the class I-like SAM-binding methyltransferase superfamily. RNA M5U methyltransferase family. RlmD subfamily.

The catalysed reaction is uridine(1939) in 23S rRNA + S-adenosyl-L-methionine = 5-methyluridine(1939) in 23S rRNA + S-adenosyl-L-homocysteine + H(+). Catalyzes the formation of 5-methyl-uridine at position 1939 (m5U1939) in 23S rRNA. The sequence is that of 23S rRNA (uracil(1939)-C(5))-methyltransferase RlmD from Acinetobacter baumannii (strain SDF).